The primary structure comprises 335 residues: MIEADRLIQPTALREDEVIDRAIRPKMLADYTGQDHVCEQMDIFIQAARKRSDALDHLLIFGPPGLGKTTLANIVANEMGVSIKTTSGPVLEKAGDLAALLTNLEENDVLFIDEIHRLSPVVEEILYPAMEDYQLDIMIGEGPAARSIKLELPPFTLIGATTRAGSLTSPLRDRFGIVQRLEFYNIKDLTQIVKRSAHFLELNLDEEGAMEIAKRSRGTPRISNRLLRRVRDYAEIKANGEISSDVASAALDMLDVDKEGFDYMDRKLLTTIIDKFMGGPVGLDNLAAAIGEERDTIEDVIEPFLIQQGFLQRTPRGRIVSQRAYLHFGYDYEPN.

Residues 4–184 (ADRLIQPTAL…FGIVQRLEFY (181 aa)) form a large ATPase domain (RuvB-L) region. Residues Ile23, Arg24, Gly65, Lys68, Thr69, Thr70, 131–133 (EDY), Arg174, Tyr184, and Arg221 each bind ATP. Position 69 (Thr69) interacts with Mg(2+). A small ATPAse domain (RuvB-S) region spans residues 185–255 (NIKDLTQIVK…VASAALDMLD (71 aa)). Positions 258 to 335 (KEGFDYMDRK…LHFGYDYEPN (78 aa)) are head domain (RuvB-H). DNA is bound by residues Arg294, Arg313, and Arg318.

Belongs to the RuvB family. In terms of assembly, homohexamer. Forms an RuvA(8)-RuvB(12)-Holliday junction (HJ) complex. HJ DNA is sandwiched between 2 RuvA tetramers; dsDNA enters through RuvA and exits via RuvB. An RuvB hexamer assembles on each DNA strand where it exits the tetramer. Each RuvB hexamer is contacted by two RuvA subunits (via domain III) on 2 adjacent RuvB subunits; this complex drives branch migration. In the full resolvosome a probable DNA-RuvA(4)-RuvB(12)-RuvC(2) complex forms which resolves the HJ.

The protein resides in the cytoplasm. The catalysed reaction is ATP + H2O = ADP + phosphate + H(+). In terms of biological role, the RuvA-RuvB-RuvC complex processes Holliday junction (HJ) DNA during genetic recombination and DNA repair, while the RuvA-RuvB complex plays an important role in the rescue of blocked DNA replication forks via replication fork reversal (RFR). RuvA specifically binds to HJ cruciform DNA, conferring on it an open structure. The RuvB hexamer acts as an ATP-dependent pump, pulling dsDNA into and through the RuvAB complex. RuvB forms 2 homohexamers on either side of HJ DNA bound by 1 or 2 RuvA tetramers; 4 subunits per hexamer contact DNA at a time. Coordinated motions by a converter formed by DNA-disengaged RuvB subunits stimulates ATP hydrolysis and nucleotide exchange. Immobilization of the converter enables RuvB to convert the ATP-contained energy into a lever motion, pulling 2 nucleotides of DNA out of the RuvA tetramer per ATP hydrolyzed, thus driving DNA branch migration. The RuvB motors rotate together with the DNA substrate, which together with the progressing nucleotide cycle form the mechanistic basis for DNA recombination by continuous HJ branch migration. Branch migration allows RuvC to scan DNA until it finds its consensus sequence, where it cleaves and resolves cruciform DNA. This chain is Holliday junction branch migration complex subunit RuvB, found in Pseudoalteromonas atlantica (strain T6c / ATCC BAA-1087).